The primary structure comprises 1439 residues: Probable histone acetyltransferase HAC-like 2 (1439 aa).

Disordered regions lie at residues 1 to 43 and 313 to 335; these read MKQG…ASAD and YGISPNKPLQRHVNPSTRSTPTP. The span at 325-335 shows a compositional bias: polar residues; that stretch reads VNPSTRSTPTP. Residues 607–687 form a TAZ-type zinc finger; that stretch reads ENTKQYHAQA…NEHCHVCCKA (81 aa). The segment at 827 to 933 adopts a PHD-type; degenerate zinc-finger fold; the sequence is KIHCHVQQET…EYTCFKCYIE (107 aa). Positions 948–1383 constitute a CBP/p300-type HAT domain; that stretch reads VRGAKDLPRT…MLYHLHNPTG (436 aa). Positions 964 to 989 form a coiled coil; that stretch reads EERLFKRLREERQERANKLKTSLDEV. Acetyl-CoA-binding positions include 1071-1073, 1090-1091, and Trp-1146; these read LDS and RT. The ZZ-type zinc finger occupies 1265 to 1328; sequence HLQYSCSHCC…ILHPVEIVGV (64 aa). Residues Cys-1270, Cys-1273, Cys-1285, Cys-1288, Cys-1294, Cys-1297, His-1310, and His-1318 each contribute to the Zn(2+) site.

It localises to the nucleus. It catalyses the reaction L-lysyl-[protein] + acetyl-CoA = N(6)-acetyl-L-lysyl-[protein] + CoA + H(+). In terms of biological role, acetyltransferase enzyme. Acetylates histones, giving a specific tag for transcriptional activation. This chain is Probable histone acetyltransferase HAC-like 2, found in Oryza sativa subsp. japonica (Rice).